A 366-amino-acid chain; its full sequence is Beta sliding clamp (366 aa).

This sequence belongs to the beta sliding clamp family. Forms a ring-shaped head-to-tail homodimer around DNA which binds and tethers DNA polymerases and other proteins to the DNA. The DNA replisome complex has a single clamp-loading complex (3 tau and 1 each of delta, delta', psi and chi subunits) which binds 3 Pol III cores (1 core on the leading strand and 2 on the lagging strand) each with a beta sliding clamp dimer. Additional proteins in the replisome are other copies of gamma, psi and chi, Ssb, DNA helicase and RNA primase.

The protein localises to the cytoplasm. In terms of biological role, confers DNA tethering and processivity to DNA polymerases and other proteins. Acts as a clamp, forming a ring around DNA (a reaction catalyzed by the clamp-loading complex) which diffuses in an ATP-independent manner freely and bidirectionally along dsDNA. Initially characterized for its ability to contact the catalytic subunit of DNA polymerase III (Pol III), a complex, multichain enzyme responsible for most of the replicative synthesis in bacteria; Pol III exhibits 3'-5' exonuclease proofreading activity. The beta chain is required for initiation of replication as well as for processivity of DNA replication. This is Beta sliding clamp (dnaN) from Vibrio cholerae serotype O1 (strain ATCC 39315 / El Tor Inaba N16961).